A 491-amino-acid polypeptide reads, in one-letter code: Probable malate:quinone oxidoreductase (491 aa).

This sequence belongs to the MQO family. Requires FAD as cofactor.

The enzyme catalyses (S)-malate + a quinone = a quinol + oxaloacetate. Its pathway is carbohydrate metabolism; tricarboxylic acid cycle; oxaloacetate from (S)-malate (quinone route): step 1/1. In Actinobacillus pleuropneumoniae serotype 7 (strain AP76), this protein is Probable malate:quinone oxidoreductase.